A 211-amino-acid chain; its full sequence is Large ribosomal subunit protein uL3 (211 aa).

N5-methylglutamine is present on Gln150.

This sequence belongs to the universal ribosomal protein uL3 family. As to quaternary structure, part of the 50S ribosomal subunit. Forms a cluster with proteins L14 and L19. In terms of processing, methylated by PrmB.

In terms of biological role, one of the primary rRNA binding proteins, it binds directly near the 3'-end of the 23S rRNA, where it nucleates assembly of the 50S subunit. The chain is Large ribosomal subunit protein uL3 from Pseudomonas entomophila (strain L48).